The chain runs to 184 residues: dCTP deaminase (184 aa).

Residues Arg97–Arg102 and Asp113 each bind dCTP. The active-site Proton donor/acceptor is Glu123. DCTP contacts are provided by Tyr155 and Gln162.

Belongs to the dCTP deaminase family. In terms of assembly, homotrimer.

The enzyme catalyses dCTP + H2O + H(+) = dUTP + NH4(+). The protein operates within pyrimidine metabolism; dUMP biosynthesis; dUMP from dCTP (dUTP route): step 1/2. Its function is as follows. Catalyzes the deamination of dCTP to dUTP. The polypeptide is dCTP deaminase (Saccharolobus solfataricus (strain ATCC 35092 / DSM 1617 / JCM 11322 / P2) (Sulfolobus solfataricus)).